A 265-amino-acid polypeptide reads, in one-letter code: 4-hydroxy-tetrahydrodipicolinate reductase (265 aa).

Residue 16–21 (GANGKM) participates in NAD(+) binding. Arg-43 provides a ligand contact to NADP(+). Residues 106-108 (GTT) and 130-133 (SENF) contribute to the NAD(+) site. His-164 functions as the Proton donor/acceptor in the catalytic mechanism. (S)-2,3,4,5-tetrahydrodipicolinate is bound at residue His-165. Lys-168 acts as the Proton donor in catalysis. 174 to 175 (AT) contacts (S)-2,3,4,5-tetrahydrodipicolinate.

This sequence belongs to the DapB family. In terms of assembly, homotetramer.

The protein localises to the cytoplasm. It carries out the reaction (S)-2,3,4,5-tetrahydrodipicolinate + NAD(+) + H2O = (2S,4S)-4-hydroxy-2,3,4,5-tetrahydrodipicolinate + NADH + H(+). It catalyses the reaction (S)-2,3,4,5-tetrahydrodipicolinate + NADP(+) + H2O = (2S,4S)-4-hydroxy-2,3,4,5-tetrahydrodipicolinate + NADPH + H(+). Its pathway is amino-acid biosynthesis; L-lysine biosynthesis via DAP pathway; (S)-tetrahydrodipicolinate from L-aspartate: step 4/4. In terms of biological role, catalyzes the conversion of 4-hydroxy-tetrahydrodipicolinate (HTPA) to tetrahydrodipicolinate. The protein is 4-hydroxy-tetrahydrodipicolinate reductase of Wigglesworthia glossinidia brevipalpis.